Consider the following 659-residue polypeptide: Serine/threonine-protein kinase StkP (659 aa).

The Cytoplasmic segment spans residues 1–342 (MIQIGKIFAG…PQAPKKHRFK (342 aa)). The Protein kinase domain maps to 12–273 (YRIVKQIGRG…EMYVDLSSSL (262 aa)). Residues 18–26 (IGRGGMADV) and Lys42 each bind ATP. Asp136 (proton acceptor) is an active-site residue. A helical membrane pass occupies residues 343 to 363 (MRYLILLASLVLVAASLIWIL). Residues 364–659 (SRTPATIAIP…YKPKTTSATP (296 aa)) lie on the Extracellular side of the membrane. PASTA domains follow at residues 366-433 (TPAT…VVSS), 434-505 (GKQS…TVAK), 506-577 (KATT…TVAK), and 578-651 (KVTS…SIYK). A disordered region spans residues 541-561 (EEESSESEPGTIMKQSPGAGT).

It belongs to the protein kinase superfamily. Ser/Thr protein kinase family. As to quaternary structure, homodimer. StkP forms dimers through its transmembrane and extracellular domains. Dimer formation likely promotes autophosphorylation activity and might be necessary for targeting StkP substrate. In terms of processing, autophosphorylation occurs predominantly at the threonine residue and weakly at the serine residue. Dephosphorylated by PhpP.

The protein localises to the cell membrane. The catalysed reaction is L-seryl-[protein] + ATP = O-phospho-L-seryl-[protein] + ADP + H(+). It catalyses the reaction L-threonyl-[protein] + ATP = O-phospho-L-threonyl-[protein] + ADP + H(+). Its function is as follows. Protein kinase involved in signal transduction pathways that regulate various cellular processes. Likely senses intracellular peptidoglycan subunits present in the cell division septa of actively growing cells; thus, intracellular unlinked peptidoglycan may serve as the signal molecules that trigger StkP phosphorylation activity on a set of substrates. Plays a crucial role in the regulation of cell shape and cell division of S.pneumoniae through control of at least DivIVA activity. Is involved in competence triggering, and is required for the expression of the central competence operon comCDE. StkP also plays an important role for bacterial survival in vivo. Identified target substrates that are specifically phosphorylated by StkP in vivo, mainly on threonine residues, are DivIVA, GlmM, PpaC, MapZ, KhpB (also called EloR/Jag, shown in strains R6 and Rx1) and StkP itself. Autophosphorylated StkP is a substrate for the cotranscribed protein phosphatase PhpP (shown in the avirulent strain Rx / Cp1015); PhpP and StkP appear to constitute a functional signaling couple in vivo. The sequence is that of Serine/threonine-protein kinase StkP (stkP) from Streptococcus pneumoniae serotype 2 (strain D39 / NCTC 7466).